A 309-amino-acid polypeptide reads, in one-letter code: Maintenance of mitochondrial morphology protein 1 (309 aa).

Over 1-16 (MGNAYIFSLQPTFTQG) the chain is Lumenal. A helical membrane pass occupies residues 17-37 (LILGQFSILFLLVLVLKYLFF). Residues 38–309 (DTVSDHAYRT…EQQAGELPVN (272 aa)) are Cytoplasmic-facing. Residues 84 to 293 (ECESADWLNA…LPGLASVSEV (210 aa)) enclose the SMP-LTD domain.

It belongs to the MMM1 family. As to quaternary structure, homodimer. Component of the ER-mitochondria encounter structure (ERMES) or MDM complex, composed of MMM1, MDM10, MDM12 and MDM34. An MMM1 homodimer associates with one molecule of MDM12 on each side in a pairwise head-to-tail manner, and the SMP-LTD domains of MMM1 and MDM12 generate a continuous hydrophobic tunnel for phospholipid trafficking.

It is found in the endoplasmic reticulum membrane. In terms of biological role, component of the ERMES/MDM complex, which serves as a molecular tether to connect the endoplasmic reticulum (ER) and mitochondria. Components of this complex are involved in the control of mitochondrial shape and protein biogenesis, and function in nonvesicular lipid trafficking between the ER and mitochondria. The MDM12-MMM1 subcomplex functions in the major beta-barrel assembly pathway that is responsible for biogenesis of all outer membrane beta-barrel proteins, and acts in a late step after the SAM complex. The MDM10-MDM12-MMM1 subcomplex further acts in the TOM40-specific pathway after the action of the MDM12-MMM1 complex. Essential for establishing and maintaining the structure of mitochondria and maintenance of mtDNA nucleoids. The protein is Maintenance of mitochondrial morphology protein 1 of Postia placenta (strain ATCC 44394 / Madison 698-R) (Brown rot fungus).